A 290-amino-acid chain; its full sequence is Protease HtpX (290 aa).

2 helical membrane-spanning segments follow: residues 4–24 (IMLFLATNLAVLIIASITLKL) and 36–56 (GSLLIFCAVFGFAGSLVSLFI). His142 lines the Zn(2+) pocket. Residue Glu143 is part of the active site. Zn(2+) is bound at residue His146. 2 helical membrane-spanning segments follow: residues 150–170 (GDMVTLALIQGVVNTFVMFFA) and 193–213 (FIATIFAELVLGILASIIVMW). Glu219 contacts Zn(2+).

Belongs to the peptidase M48B family. Zn(2+) serves as cofactor.

It localises to the cell inner membrane. The chain is Protease HtpX from Ectopseudomonas mendocina (strain ymp) (Pseudomonas mendocina).